A 319-amino-acid polypeptide reads, in one-letter code: Acetyl esterase (319 aa).

An Involved in the stabilization of the negatively charged intermediate by the formation of the oxyanion hole motif is present at residues 91 to 93; that stretch reads HGG. Catalysis depends on residues S165, D262, and H292.

The protein belongs to the 'GDXG' lipolytic enzyme family. Homodimer. Interacts with MalT and MelA.

The protein localises to the cytoplasm. Its function is as follows. Displays esterase activity towards short chain fatty esters (acyl chain length of up to 8 carbons). Able to hydrolyze triacetylglycerol (triacetin) and tributyrylglycerol (tributyrin), but not trioleylglycerol (triolein) or cholesterol oleate. Negatively regulates MalT activity by antagonizing maltotriose binding. Inhibits MelA galactosidase activity. This chain is Acetyl esterase, found in Shigella flexneri serotype 5b (strain 8401).